A 366-amino-acid polypeptide reads, in one-letter code: MVFNMNLKEQAMSLFYESGFPKDFFSFLWITASILILVSGVVIGVLVIVWLERKISAGIQQRIGPEYAGPLGIIQALADGTKLLLKEDIIPSRGDALLFSIGPAIVVIPVLLSYLVIPFGHNIILADLNIGVFFWIAVSSIAPLGLFMAGYGSNNKYSFLGGLRAVAQAISYEIPLALCVLSISLLSNSLSTVDIVEIQSKFGFWGWNVWRQPIGFIAFLIASLAECERLPFDLPEAEEELVAGYQTEYSGIKFGLFYVASYLNLLVSSLFVTVLYLGGWNLSIPFLPNFPYLEWKFTAETSEVINVIIGIIITLAKAYSFLFISIVTRWTLPRVRMDQLLNLGWKFLLPIALGNLLLTASFQLIA.

Transmembrane regions (helical) follow at residues W29 to V49, L97 to I117, I130 to G150, V166 to L186, F202 to A222, F254 to V274, V307 to V327, and L340 to A360.

Belongs to the complex I subunit 1 family. As to quaternary structure, NDH is composed of at least 16 different subunits, 5 of which are encoded in the nucleus.

It localises to the plastid. Its subcellular location is the chloroplast thylakoid membrane. The enzyme catalyses a plastoquinone + NADH + (n+1) H(+)(in) = a plastoquinol + NAD(+) + n H(+)(out). It carries out the reaction a plastoquinone + NADPH + (n+1) H(+)(in) = a plastoquinol + NADP(+) + n H(+)(out). Its function is as follows. NDH shuttles electrons from NAD(P)H:plastoquinone, via FMN and iron-sulfur (Fe-S) centers, to quinones in the photosynthetic chain and possibly in a chloroplast respiratory chain. The immediate electron acceptor for the enzyme in this species is believed to be plastoquinone. Couples the redox reaction to proton translocation, and thus conserves the redox energy in a proton gradient. This is NAD(P)H-quinone oxidoreductase subunit 1, chloroplastic from Anthoceros angustus (Hornwort).